The chain runs to 270 residues: Co-chaperone protein DjlA (270 aa).

Residues 1–6 (MNWIGK) lie on the Periplasmic side of the membrane. The chain crosses the membrane as a helical span at residues 7 to 30 (LIGMMLGFILAGPIGLIIGLFIGH). Topologically, residues 31–270 (VVFDQGRFRQ…EQIRKVRSMV (240 aa)) are cytoplasmic. The J domain occupies 204-270 (DAYKVLGLTS…EQIRKVRSMV (67 aa)).

In terms of assembly, homodimer.

It localises to the cell inner membrane. Regulatory DnaK co-chaperone. Direct interaction between DnaK and DjlA is needed for the induction of the wcaABCDE operon, involved in the synthesis of a colanic acid polysaccharide capsule, possibly through activation of the RcsB/RcsC phosphotransfer signaling pathway. The colanic acid capsule may help the bacterium survive conditions outside the host. This Coxiella burnetii (strain RSA 493 / Nine Mile phase I) protein is Co-chaperone protein DjlA.